The chain runs to 345 residues: Eukaryotic translation initiation factor 3 subunit F (345 aa).

Positions 30-166 (VVIQPQAIFS…TRAYISAPVG (137 aa)) constitute an MPN domain. The disordered stretch occupies residues 308–345 (GGESGGAESGAQRGQRGGKGGRGGQQRNQERGAEEARA). The segment covering 322–331 (QRGGKGGRGG) has biased composition (gly residues). Positions 335–345 (NQERGAEEARA) are enriched in basic and acidic residues.

The protein belongs to the eIF-3 subunit F family. In terms of assembly, component of the eukaryotic translation initiation factor 3 (eIF-3) complex.

Its subcellular location is the cytoplasm. In terms of biological role, component of the eukaryotic translation initiation factor 3 (eIF-3) complex, which is involved in protein synthesis of a specialized repertoire of mRNAs and, together with other initiation factors, stimulates binding of mRNA and methionyl-tRNAi to the 40S ribosome. The eIF-3 complex specifically targets and initiates translation of a subset of mRNAs involved in cell proliferation. The sequence is that of Eukaryotic translation initiation factor 3 subunit F from Aspergillus clavatus (strain ATCC 1007 / CBS 513.65 / DSM 816 / NCTC 3887 / NRRL 1 / QM 1276 / 107).